Here is a 99-residue protein sequence, read N- to C-terminus: Co-chaperonin GroES (99 aa).

This sequence belongs to the GroES chaperonin family. Heptamer of 7 subunits arranged in a ring. Interacts with the chaperonin GroEL.

It is found in the cytoplasm. Together with the chaperonin GroEL, plays an essential role in assisting protein folding. The GroEL-GroES system forms a nano-cage that allows encapsulation of the non-native substrate proteins and provides a physical environment optimized to promote and accelerate protein folding. GroES binds to the apical surface of the GroEL ring, thereby capping the opening of the GroEL channel. In Corynebacterium efficiens (strain DSM 44549 / YS-314 / AJ 12310 / JCM 11189 / NBRC 100395), this protein is Co-chaperonin GroES.